The chain runs to 451 residues: Glycylpeptide N-tetradecanoyltransferase (451 aa).

Tetradecanoyl-CoA-binding positions include 177–179 (LCI) and 185–189 (NKRLA). Leu451 acts as the Proton acceptor; via carboxylate in catalysis.

It belongs to the NMT family. In terms of assembly, monomer.

The protein localises to the cytoplasm. It catalyses the reaction N-terminal glycyl-[protein] + tetradecanoyl-CoA = N-tetradecanoylglycyl-[protein] + CoA + H(+). With respect to regulation, competitively inhibited by SC-58272, a peptidomimetic derived from the N-terminal sequence of a natural substrate. Adds a myristoyl group to the N-terminal glycine residue of certain cellular proteins. Substrate specificity requires an N-terminal glycine in the nascent polypeptide substrates. Ser is present at position 5 in almost all known N-myristoyl proteins and Lys is commonly encountered at postion 6. Basic residues are preferred at positions 7 and 8. In Candida albicans (strain SC5314 / ATCC MYA-2876) (Yeast), this protein is Glycylpeptide N-tetradecanoyltransferase (NMT1).